The sequence spans 246 residues: tRNA pseudouridine synthase A (246 aa).

The active-site Nucleophile is the Asp-52. Tyr-111 provides a ligand contact to substrate.

Belongs to the tRNA pseudouridine synthase TruA family. Homodimer.

The enzyme catalyses uridine(38/39/40) in tRNA = pseudouridine(38/39/40) in tRNA. Functionally, formation of pseudouridine at positions 38, 39 and 40 in the anticodon stem and loop of transfer RNAs. The sequence is that of tRNA pseudouridine synthase A from Borreliella burgdorferi (strain ZS7) (Borrelia burgdorferi).